A 221-amino-acid chain; its full sequence is Deoxyribose-phosphate aldolase (221 aa).

Catalysis depends on D90, which acts as the Proton donor/acceptor. K152 functions as the Schiff-base intermediate with acetaldehyde in the catalytic mechanism. K181 (proton donor/acceptor) is an active-site residue.

This sequence belongs to the DeoC/FbaB aldolase family. DeoC type 1 subfamily.

Its subcellular location is the cytoplasm. The catalysed reaction is 2-deoxy-D-ribose 5-phosphate = D-glyceraldehyde 3-phosphate + acetaldehyde. Its pathway is carbohydrate degradation; 2-deoxy-D-ribose 1-phosphate degradation; D-glyceraldehyde 3-phosphate and acetaldehyde from 2-deoxy-alpha-D-ribose 1-phosphate: step 2/2. In terms of biological role, catalyzes a reversible aldol reaction between acetaldehyde and D-glyceraldehyde 3-phosphate to generate 2-deoxy-D-ribose 5-phosphate. The polypeptide is Deoxyribose-phosphate aldolase (Exiguobacterium sp. (strain ATCC BAA-1283 / AT1b)).